The primary structure comprises 103 residues: Small ribosomal subunit protein uS10 (103 aa).

Belongs to the universal ribosomal protein uS10 family. As to quaternary structure, part of the 30S ribosomal subunit.

Its function is as follows. Involved in the binding of tRNA to the ribosomes. In Campylobacter jejuni subsp. jejuni serotype O:6 (strain 81116 / NCTC 11828), this protein is Small ribosomal subunit protein uS10.